Consider the following 388-residue polypeptide: Chorismate synthase (388 aa).

Positions 39 and 45 each coordinate NADP(+). FMN contacts are provided by residues 130 to 132 (RSS), 251 to 252 (NA), Gly296, 311 to 315 (KPIPT), and Arg337.

Belongs to the chorismate synthase family. In terms of assembly, homotetramer. FMNH2 is required as a cofactor.

It catalyses the reaction 5-O-(1-carboxyvinyl)-3-phosphoshikimate = chorismate + phosphate. The protein operates within metabolic intermediate biosynthesis; chorismate biosynthesis; chorismate from D-erythrose 4-phosphate and phosphoenolpyruvate: step 7/7. Functionally, catalyzes the anti-1,4-elimination of the C-3 phosphate and the C-6 proR hydrogen from 5-enolpyruvylshikimate-3-phosphate (EPSP) to yield chorismate, which is the branch point compound that serves as the starting substrate for the three terminal pathways of aromatic amino acid biosynthesis. This reaction introduces a second double bond into the aromatic ring system. This Lactococcus lactis subsp. lactis (strain IL1403) (Streptococcus lactis) protein is Chorismate synthase.